Reading from the N-terminus, the 290-residue chain is Shikimate dehydrogenase (NADP(+)) (290 aa).

Residues 24 to 26 (SKS) and threonine 71 each bind shikimate. Lysine 75 (proton acceptor) is an active-site residue. Shikimate contacts are provided by asparagine 96 and aspartate 111. NADP(+) is bound by residues 135–139 (GAGGA), 159–164 (NRTKQR), and isoleucine 228. Tyrosine 230 contributes to the shikimate binding site. Glycine 251 is an NADP(+) binding site.

The protein belongs to the shikimate dehydrogenase family. As to quaternary structure, homodimer.

The catalysed reaction is shikimate + NADP(+) = 3-dehydroshikimate + NADPH + H(+). It functions in the pathway metabolic intermediate biosynthesis; chorismate biosynthesis; chorismate from D-erythrose 4-phosphate and phosphoenolpyruvate: step 4/7. Functionally, involved in the biosynthesis of the chorismate, which leads to the biosynthesis of aromatic amino acids. Catalyzes the reversible NADPH linked reduction of 3-dehydroshikimate (DHSA) to yield shikimate (SA). The chain is Shikimate dehydrogenase (NADP(+)) from Bartonella tribocorum (strain CIP 105476 / IBS 506).